We begin with the raw amino-acid sequence, 286 residues long: Acyl-CoA-binding domain-containing protein 6 (286 aa).

Residues 32–117 form the ACB domain; that stretch reads LQCQFEQAAK…VKKLDPDWSP (86 aa). An acyl-CoA contacts are provided by residues 59-63, Lys-85, and Tyr-104; that span reads YARYK. ANK repeat units follow at residues 182–211 and 215–244; these read EGRS…HINM and EGQT…DPSL.

It localises to the cytoplasm. The protein resides in the nucleus. Its function is as follows. Binds long-chain acyl-coenzyme A molecules with a strong preference for unsaturated C18:1-CoA. Does not bind fatty acids. Plays a role in protein N-myristoylation. The polypeptide is Acyl-CoA-binding domain-containing protein 6 (acbd6) (Xenopus laevis (African clawed frog)).